We begin with the raw amino-acid sequence, 504 residues long: Protein phosphatase 1J (504 aa).

Disordered stretches follow at residues 1–102 (MLNR…RLPW) and 194–217 (PLCL…SPQS). The span at 14–23 (SSSGTSSQRS) shows a compositional bias: low complexity. T41 is subject to Phosphothreonine. The segment covering 59-73 (TAETPVSFSRPTFLQ) has biased composition (polar residues). Residues S65 and S75 each carry the phosphoserine modification. The region spanning 103 to 496 (STGYAEVINA…DDISVFVIPL (394 aa)) is the PPM-type phosphatase domain. Over residues 197–217 (LPSTPGTPGVSSPSQLVSPQS) the composition is skewed to low complexity.

This sequence belongs to the PP2C family. Interacts with UBE2I/UBC9.

It catalyses the reaction O-phospho-L-seryl-[protein] + H2O = L-seryl-[protein] + phosphate. The catalysed reaction is O-phospho-L-threonyl-[protein] + H2O = L-threonyl-[protein] + phosphate. This is Protein phosphatase 1J (Ppm1j) from Rattus norvegicus (Rat).